The chain runs to 363 residues: Putative agmatine deiminase (363 aa).

Polar residues predominate over residues 1–10 (MTKQLSTSPK). The disordered stretch occupies residues 1-20 (MTKQLSTSPKQDGFRMPAEH). The Amidino-cysteine intermediate role is filled by cysteine 355.

It belongs to the agmatine deiminase family.

The catalysed reaction is agmatine + H2O = N-carbamoylputrescine + NH4(+). This Photobacterium profundum (strain SS9) protein is Putative agmatine deiminase.